The following is a 279-amino-acid chain: Putative pyruvate, phosphate dikinase regulatory protein (279 aa).

153 to 160 serves as a coordination point for ADP; that stretch reads GVSRTSKT.

The protein belongs to the pyruvate, phosphate/water dikinase regulatory protein family. PDRP subfamily.

The enzyme catalyses N(tele)-phospho-L-histidyl/L-threonyl-[pyruvate, phosphate dikinase] + ADP = N(tele)-phospho-L-histidyl/O-phospho-L-threonyl-[pyruvate, phosphate dikinase] + AMP + H(+). It carries out the reaction N(tele)-phospho-L-histidyl/O-phospho-L-threonyl-[pyruvate, phosphate dikinase] + phosphate + H(+) = N(tele)-phospho-L-histidyl/L-threonyl-[pyruvate, phosphate dikinase] + diphosphate. Bifunctional serine/threonine kinase and phosphorylase involved in the regulation of the pyruvate, phosphate dikinase (PPDK) by catalyzing its phosphorylation/dephosphorylation. This is Putative pyruvate, phosphate dikinase regulatory protein from Rhodopseudomonas palustris (strain BisA53).